A 90-amino-acid polypeptide reads, in one-letter code: Small ribosomal subunit protein uS17 (90 aa).

This sequence belongs to the universal ribosomal protein uS17 family. Part of the 30S ribosomal subunit.

Functionally, one of the primary rRNA binding proteins, it binds specifically to the 5'-end of 16S ribosomal RNA. The chain is Small ribosomal subunit protein uS17 from Burkholderia mallei (strain NCTC 10247).